We begin with the raw amino-acid sequence, 136 residues long: Sec-independent protein translocase protein TatB (136 aa).

The helical transmembrane segment at 1-21 (MFDIGFWELVLISVIGLVVLG) threads the bilayer. Positions 66–136 (ASKQGLSDLD…TTPPRQDKNE (71 aa)) are disordered. Composition is skewed to basic and acidic residues over residues 77-89 (ELQK…KETA) and 96-107 (YKKDIDDIKTSL). Over residues 108-130 (DKNPSGTTQQENSILDSSKTTPP) the composition is skewed to polar residues.

It belongs to the TatB family. The Tat system comprises two distinct complexes: a TatABC complex, containing multiple copies of TatA, TatB and TatC subunits, and a separate TatA complex, containing only TatA subunits. Substrates initially bind to the TatABC complex, which probably triggers association of the separate TatA complex to form the active translocon.

The protein localises to the cell inner membrane. In terms of biological role, part of the twin-arginine translocation (Tat) system that transports large folded proteins containing a characteristic twin-arginine motif in their signal peptide across membranes. Together with TatC, TatB is part of a receptor directly interacting with Tat signal peptides. TatB may form an oligomeric binding site that transiently accommodates folded Tat precursor proteins before their translocation. The protein is Sec-independent protein translocase protein TatB of Psychromonas ingrahamii (strain DSM 17664 / CCUG 51855 / 37).